We begin with the raw amino-acid sequence, 408 residues long: Peptidase T (408 aa).

Histidine 78 is a binding site for Zn(2+). The active site involves aspartate 80. Aspartate 140 lines the Zn(2+) pocket. Glutamate 173 acts as the Proton acceptor in catalysis. Positions 174, 196, and 379 each coordinate Zn(2+).

It belongs to the peptidase M20B family. Zn(2+) serves as cofactor.

It is found in the cytoplasm. It carries out the reaction Release of the N-terminal residue from a tripeptide.. Its function is as follows. Cleaves the N-terminal amino acid of tripeptides. This is Peptidase T from Salmonella arizonae (strain ATCC BAA-731 / CDC346-86 / RSK2980).